The sequence spans 352 residues: Carbohydrate sulfotransferase 11 (352 aa).

The Cytoplasmic portion of the chain corresponds to 1–16; that stretch reads MKPALLEVMRMNRICR. Residues 17-37 form a helical; Signal-anchor for type II membrane protein membrane-spanning segment; it reads MVLATCLGSFILVIFYFQSML. Residues 38-352 lie on the Lumenal side of the membrane; that stretch reads HPVMRRNPFG…YSVPNYLKLD (315 aa). 3'-phosphoadenylyl sulfate is bound by residues 124 to 130 and 186 to 194; these read PKVACTN and REPFERLVS. Asparagine 205, asparagine 223, asparagine 321, and asparagine 342 each carry an N-linked (GlcNAc...) asparagine glycan.

Belongs to the sulfotransferase 2 family. In terms of processing, N-glycosylated; required for activity and stability.

It is found in the golgi apparatus membrane. The catalysed reaction is chondroitin beta-D-glucuronate + n 3'-phosphoadenylyl sulfate = chondroitin 4'-sulfate + n adenosine 3',5'-bisphosphate + n H(+). Its function is as follows. Catalyzes the transfer of sulfate to position 4 of the N-acetylgalactosamine (GalNAc) residue of chondroitin. Chondroitin sulfate constitutes the predominant proteoglycan present in cartilage and is distributed on the surfaces of many cells and extracellular matrices. Can also sulfate Gal residues in desulfated dermatan sulfate. Preferentially sulfates in GlcA-&gt;GalNAc unit than in IdoA-&gt;GalNAc unit. Does not form 4, 6-di-O-sulfated GalNAc when chondroitin sulfate C is used as an acceptor. The sequence is that of Carbohydrate sulfotransferase 11 (Chst11) from Rattus norvegicus (Rat).